Consider the following 380-residue polypeptide: METKTKLHVGLLFGGNSSEHDVSKRSAHNIYDAMDKDRYNVSLFLLTRDGFVLSDAASRRVFDGEDEATVAAEEQAKVDASNPLAPIWNLSQAKDIDVFFPIIHGNLGEDGTIQGLFRLLKKPFVGSGVLASAVSFDKDMTKQVLTAHGIRNTKYVVLTPDNRADFDYATIQSRLGDNVFIKPANQGSSVGIHKASNVQEYLDGVADAFRYDYKVLVEQTIDGPQEVEISILGNEQPQASKLGAIRVPESDVFYDYNNKFVDASGVTFEVPVKLSDELTQEITQMGLQTYAALGLKGMARIDYLVSKDGVPYVGEVNTLPGFTNISLYPQLWQATGINYADLIDRLIELALSEFHYQDELAYDFIPLDDHSAASTYKPKA.

The ATP-grasp domain maps to 142 to 348 (KQVLTAHGIR…YADLIDRLIE (207 aa)). 172-227 (QSRLGDNVFIKPANQGSSVGIHKASNVQEYLDGVADAFRYDYKVLVEQTIDGPQEV) serves as a coordination point for ATP. Aspartate 302, glutamate 315, and asparagine 317 together coordinate Mg(2+).

This sequence belongs to the D-alanine--D-alanine ligase family. It depends on Mg(2+) as a cofactor. The cofactor is Mn(2+).

Its subcellular location is the cytoplasm. The enzyme catalyses 2 D-alanine + ATP = D-alanyl-D-alanine + ADP + phosphate + H(+). It participates in cell wall biogenesis; peptidoglycan biosynthesis. Cell wall formation. This Levilactobacillus brevis (strain ATCC 367 / BCRC 12310 / CIP 105137 / JCM 1170 / LMG 11437 / NCIMB 947 / NCTC 947) (Lactobacillus brevis) protein is D-alanine--D-alanine ligase.